A 538-amino-acid polypeptide reads, in one-letter code: Frizzled-4 (538 aa).

The first 37 residues, 1–37 (MAWQGTGPSVRGMPGGVRLRLGLLLLQLLLLQRPALG), serve as a signal peptide directing secretion. Residues 38 to 213 (FGDEEERRCD…KCGYDAGLYS (176 aa)) are Extracellular-facing. Residues 41 to 162 (EEERRCDPIR…NDHNHMCMEG (122 aa)) enclose the FZ domain. Disulfide bonds link cysteine 46–cysteine 107, cysteine 54–cysteine 100, cysteine 91–cysteine 129, cysteine 118–cysteine 159, cysteine 122–cysteine 146, cysteine 182–cysteine 201, cysteine 205–cysteine 283, and cysteine 303–cysteine 378. Asparagine 60 carries N-linked (GlcNAc...) asparagine glycosylation. N-linked (GlcNAc...) asparagine glycosylation occurs at asparagine 145. A helical transmembrane segment spans residues 214–244 (RSAKEFTDIWMAVWASLCFISTTFTVLTFLI). The Cytoplasmic segment spans residues 245–250 (DSSRFS). The chain crosses the membrane as a helical span at residues 251-276 (YPERPIIFLSMCYNIYSIAYIVRLTV). The Extracellular segment spans residues 277-300 (GRERISCDFEEAAEPVLIQEGLKN). The chain crosses the membrane as a helical span at residues 301-334 (TGCAIIFLLMYFFGMASSIWWVILTLTWFLAAGL). At 335-337 (KWG) the chain is on the cytoplasmic side. The helical transmembrane segment at 338–366 (HEAIEMHSSYFHIAAWAIPAVKTIVILIM) threads the bilayer. At 367 to 384 (RLVDADELTGLCYVGNQS) the chain is on the extracellular side. Residue asparagine 382 is glycosylated (N-linked (GlcNAc...) asparagine). A helical transmembrane segment spans residues 385–419 (LDALTGFVVAPLFTYLVIGTLFIAAGLVALFKIRS). The Cytoplasmic segment spans residues 420-432 (NLQKDGTKTDKLE). Residues 433–461 (RLMVKIGVFSVLYTVPATCVIACYFYEIS) traverse the membrane as a helical segment. At 462-474 (NWALFRYSADDSN) the chain is on the extracellular side. Residues 475–496 (MAVEMLKIFMSLLVGITSGMWI) traverse the membrane as a helical segment. Residues 497-538 (WSAKTLHTWQKCSNRLVNSGKVKREKRGNGWVKPGKGNETVV) are Cytoplasmic-facing. Residues 500 to 505 (KTLHTW) carry the Lys-Thr-X-X-X-Trp motif, mediates interaction with the PDZ domain of Dvl family members motif. The PDZ-binding motif lies at 536–538 (TVV).

Belongs to the G-protein coupled receptor Fz/Smo family. Interacts with MAGI3 and NDP. Component of a complex, at least composed of TSPAN12, FZD4 and norrin (NDP). Interacts (via FZ domain) with TSKU; TSKU competes with WNT2B for binding to FZD4, inhibiting Wnt signaling and repressing peripheral eye development. Interacts with glypican GPC3. In terms of processing, ubiquitinated by ZNRF3, leading to its degradation by the proteasome.

The protein localises to the cell membrane. Its function is as follows. Receptor for Wnt proteins. Most of frizzled receptors are coupled to the beta-catenin (CTNNB1) canonical signaling pathway, which leads to the activation of disheveled proteins, inhibition of GSK-3 kinase, nuclear accumulation of beta-catenin (CTNNB1) and activation of Wnt target genes. Plays a critical role in retinal vascularization by acting as a receptor for Wnt proteins and norrin (NDP). In retina, it can be both activated by Wnt protein-binding, but also by a Wnt-independent signaling via binding of norrin (NDP), promoting in both cases beta-catenin (CTNNB1) accumulation and stimulation of LEF/TCF-mediated transcriptional programs. A second signaling pathway involving PKC and calcium fluxes has been seen for some family members, but it is not yet clear if it represents a distinct pathway or if it can be integrated in the canonical pathway, as PKC seems to be required for Wnt-mediated inactivation of GSK-3 kinase. Both pathways seem to involve interactions with G-proteins. May be involved in transduction and intercellular transmission of polarity information during tissue morphogenesis and/or in differentiated tissues. The sequence is that of Frizzled-4 (Fzd4) from Rattus norvegicus (Rat).